The primary structure comprises 232 residues: MKFAVIVFPGSNCDRDVVTVTRGLLDQPTRLVWHTEDDLDGCDVAVIPGGFSYGDYLRCGAIARFSPVMQAVRRHAERGGLVIGICNGFQVLTEAGLLPGALVRNRDLQFVCDRVALKVERTDLPWVHSYRPGEVITLPIAHGEGCYYAEEATLAELEENRQVVFRYCRPDGTIDAVGNPNGSLHNIAGLCNRHGNVLGMMPHPERASDPILGGSDGRRLFESLVASALAVV.

In terms of domain architecture, Glutamine amidotransferase type-1 spans Phe-3 to Val-232. The Nucleophile role is filled by Cys-86. Catalysis depends on residues His-203 and Glu-205.

Part of the FGAM synthase complex composed of 1 PurL, 1 PurQ and 2 PurS subunits.

It is found in the cytoplasm. It carries out the reaction N(2)-formyl-N(1)-(5-phospho-beta-D-ribosyl)glycinamide + L-glutamine + ATP + H2O = 2-formamido-N(1)-(5-O-phospho-beta-D-ribosyl)acetamidine + L-glutamate + ADP + phosphate + H(+). The enzyme catalyses L-glutamine + H2O = L-glutamate + NH4(+). It functions in the pathway purine metabolism; IMP biosynthesis via de novo pathway; 5-amino-1-(5-phospho-D-ribosyl)imidazole from N(2)-formyl-N(1)-(5-phospho-D-ribosyl)glycinamide: step 1/2. Functionally, part of the phosphoribosylformylglycinamidine synthase complex involved in the purines biosynthetic pathway. Catalyzes the ATP-dependent conversion of formylglycinamide ribonucleotide (FGAR) and glutamine to yield formylglycinamidine ribonucleotide (FGAM) and glutamate. The FGAM synthase complex is composed of three subunits. PurQ produces an ammonia molecule by converting glutamine to glutamate. PurL transfers the ammonia molecule to FGAR to form FGAM in an ATP-dependent manner. PurS interacts with PurQ and PurL and is thought to assist in the transfer of the ammonia molecule from PurQ to PurL. This chain is Phosphoribosylformylglycinamidine synthase subunit PurQ, found in Gloeobacter violaceus (strain ATCC 29082 / PCC 7421).